Here is a 198-residue protein sequence, read N- to C-terminus: Nucleoside triphosphate pyrophosphatase (198 aa).

Catalysis depends on Asp-70, which acts as the Proton acceptor.

The protein belongs to the Maf family. The cofactor is a divalent metal cation.

It localises to the cytoplasm. It carries out the reaction a ribonucleoside 5'-triphosphate + H2O = a ribonucleoside 5'-phosphate + diphosphate + H(+). The enzyme catalyses a 2'-deoxyribonucleoside 5'-triphosphate + H2O = a 2'-deoxyribonucleoside 5'-phosphate + diphosphate + H(+). Nucleoside triphosphate pyrophosphatase. May have a dual role in cell division arrest and in preventing the incorporation of modified nucleotides into cellular nucleic acids. This chain is Nucleoside triphosphate pyrophosphatase, found in Thermosynechococcus vestitus (strain NIES-2133 / IAM M-273 / BP-1).